The chain runs to 288 residues: B3 domain-containing protein At2g35310 (288 aa).

2 DNA-binding regions (TF-B3) span residues 19–114 (FFKV…FMQD) and 196–288 (AEFS…VSKP).

Its subcellular location is the nucleus. This is B3 domain-containing protein At2g35310 from Arabidopsis thaliana (Mouse-ear cress).